We begin with the raw amino-acid sequence, 330 residues long: Membrane-associated protein VIPP1, chloroplastic (330 aa).

A chloroplast-targeting transit peptide spans 1–64 (MALKASPVTG…LRLACDNRLR (64 aa)). Coiled coils occupy residues 124–259 (SQKQ…LTQI) and 312–329 (KDSE…KAND). The interval 287–312 (LSGSSKKGELPPGRSTVAASTRYPFK) is disordered.

Belongs to the PspA/Vipp/IM30 family. In terms of assembly, homomultimer. Complex formation involves interaction via the central alpha-helical domain (71-286).

It localises to the plastid. It is found in the chloroplast inner membrane. The protein resides in the chloroplast thylakoid membrane. Its function is as follows. Required for plastid vesicle formation and thylakoid membrane biogenesis, but not for functional assembly of thylakoid protein complexes. This chain is Membrane-associated protein VIPP1, chloroplastic, found in Arabidopsis thaliana (Mouse-ear cress).